Consider the following 1242-residue polypeptide: Myosin-16 (1242 aa).

In terms of domain architecture, Myosin N-terminal SH3-like spans 6–55 (MVDSHVWVEDPERAWIDGVVLNIKGEEAEIKTNDGRDVIANLSRLYPKDT). One can recognise a Myosin motor domain in the interval 60-729 (EGVEDMTRLS…QMAELDAHRT (670 aa)). Residues 154 to 161 (GESGSGKT) and 207 to 215 (NNNSSRFGK) each bind ATP. Actin-binding stretches follow at residues 493 to 527 (LIEKKPGGIIALLDEACMLPKSTPETFSEKLYHTF), 529 to 552 (DHKRFMKPKLTRSDFTLVHYAGDV), 587 to 610 (FPPLPKESSKSKFSSIGARFKLQL), and 610 to 632 (LQQLMETLNSTEPHYIRCVKPNN). IQ domains are found at residues 732–761 (LGESARMIQGQVRTRLTRERFVLMRRASVN), 755–784 (MRRASVNIQANWRGNIARKISKEMRREEAA), 780–809 (REEAAIKIQKNLRRQIAKKDYGKTKSSALT), 803–832 (TKSSALTLQSGVRTMAARHEFRYKLTTRAA), 828–857 (TTRAATVIQAYWRGYSAISDYKKLKRVSLL), and 851–880 (LKRVSLLCKSNLRGRIARKQLGQSKQADRK). Disordered stretches follow at residues 869-893 (KQLGQSKQADRKEETEKERKVELSN) and 908-1042 (EQSD…ERKT). Basic and acidic residues predominate over residues 876-893 (QADRKEETEKERKVELSN). 6 repeat units span residues 876–908 (QADRKEETEKERKVELSNRAEEAVDMSFVLHSE), 909–940 (QSDDAESGHGRKAKLSIESEDGLDKSSVLHSE), 941–965 (QSDDEELGHERKTKLSIESEDGHSD), 966–997 (QSDDEEIEHERKTKHCIQAEDGIEKSYVMHSD), 998–1029 (QSDDEEIGHKRKTKHSIQAEDGIEKSFVVHSD), and 1030–1061 (QSDDEEIGHERKTKHAIQVEDGIQKSFVTCSE). Residues 876–1061 (QADRKEETEK…IQKSFVTCSE (186 aa)) form a 6 X 33 AA repeats of Q-S-D-D-x-E-E-x(2)-H-x-R-K-x-K-x(2)-I-x(2)-E-D-G-x(3)-S-x-V-x-H-S-x region. A compositionally biased stretch (basic and acidic residues) spans 948-966 (GHERKTKLSIESEDGHSDQ). A coiled-coil region spans residues 1079-1142 (DTEIESLTAE…QLQDSLNRLL (64 aa)). Residues 1175–1242 (DLADSSENSE…DKEGGFEDYF (68 aa)) form a disordered region. The segment covering 1179 to 1191 (SSENSEASSSDSD) has biased composition (low complexity). Polar residues predominate over residues 1199–1224 (PSSDNFSTFNPNQLQVIVQDLSTTEA). Basic and acidic residues predominate over residues 1225 to 1242 (KGTESYDSDKEGGFEDYF).

It belongs to the TRAFAC class myosin-kinesin ATPase superfamily. Myosin family. Plant myosin class XI subfamily. In terms of assembly, homodimer. As to expression, expressed in flowers and leaves.

Its subcellular location is the cytoplasm. In terms of biological role, myosin heavy chain that is required for the cell cycle-regulated transport of various organelles and proteins for their segregation. Functions by binding with its tail domain to receptor proteins on organelles and exerting force with its N-terminal motor domain against actin filaments, thereby transporting its cargo along polarized actin cables. In Arabidopsis thaliana (Mouse-ear cress), this protein is Myosin-16 (XI-J).